We begin with the raw amino-acid sequence, 140 residues long: Class I hydrophobin C (140 aa).

A signal peptide spans 1 to 23 (MKFFVPAFLFAATAMALPGSGSA). 4 disulfide bridges follow: C41–C114, C49–C108, C50–C85, and C115–C133.

The protein belongs to the fungal hydrophobin family.

It is found in the secreted. It localises to the cell wall. Functionally, aerial growth, conidiation, and dispersal of filamentous fungi in the environment rely upon a capability of their secreting small amphipathic proteins called hydrophobins (HPBs) with low sequence identity. Class I can self-assemble into an outermost layer of rodlet bundles on aerial cell surfaces, conferring cellular hydrophobicity that supports fungal growth, development and dispersal; whereas Class II form highly ordered films at water-air interfaces through intermolecular interactions but contribute nothing to the rodlet structure. In P.expansum, hydrophobins contribute to germination, tolerance to cold stress and mycotoxins patulin and citrinin production. HfbC is involved in the virulence on apple. The chain is Class I hydrophobin C from Penicillium expansum (Blue mold rot fungus).